The primary structure comprises 383 residues: 4-hydroxy-3-methylbut-2-en-1-yl diphosphate synthase (flavodoxin) (383 aa).

[4Fe-4S] cluster-binding residues include Cys-275, Cys-278, Cys-310, and Glu-317.

Belongs to the IspG family. The cofactor is [4Fe-4S] cluster.

It carries out the reaction (2E)-4-hydroxy-3-methylbut-2-enyl diphosphate + oxidized [flavodoxin] + H2O + 2 H(+) = 2-C-methyl-D-erythritol 2,4-cyclic diphosphate + reduced [flavodoxin]. It functions in the pathway isoprenoid biosynthesis; isopentenyl diphosphate biosynthesis via DXP pathway; isopentenyl diphosphate from 1-deoxy-D-xylulose 5-phosphate: step 5/6. Its function is as follows. Converts 2C-methyl-D-erythritol 2,4-cyclodiphosphate (ME-2,4cPP) into 1-hydroxy-2-methyl-2-(E)-butenyl 4-diphosphate. The sequence is that of 4-hydroxy-3-methylbut-2-en-1-yl diphosphate synthase (flavodoxin) from Dinoroseobacter shibae (strain DSM 16493 / NCIMB 14021 / DFL 12).